The chain runs to 245 residues: UPF0246 protein CE1889 (245 aa).

Positions 1–20 (MLILLPPSETKTPGGAGAPL) are disordered.

This sequence belongs to the UPF0246 family.

This is UPF0246 protein CE1889 from Corynebacterium efficiens (strain DSM 44549 / YS-314 / AJ 12310 / JCM 11189 / NBRC 100395).